The following is a 525-amino-acid chain: Protein disulfide-isomerase A2 (525 aa).

An N-terminal signal peptide occupies residues 1–21; that stretch reads MSCQLLPVLLLLLLRASCPWG. A Thioredoxin 1 domain is found at 27-152; it reads RSPSEEPPEE…IAEWLRRRVG (126 aa). Active-site nucleophile residues include Cys-71 and Cys-74. A disulfide bridge links Cys-71 with Cys-74. 2 N-linked (GlcNAc...) asparagine glycosylation sites follow: Asn-127 and Asn-284. Residues 367–496 form the Thioredoxin 2 domain; sequence VLNGQVKPYL…FSKFLDNGGV (130 aa). Active-site nucleophile residues include Cys-418 and Cys-421. An intrachain disulfide couples Cys-418 to Cys-421. A disordered region spans residues 498 to 525; that stretch reads PTEEPLEEPAAPFPEPPANSTMGSKEEL. The N-linked (GlcNAc...) asparagine glycan is linked to Asn-516. Residues 516-525 show a composition bias toward polar residues; it reads NSTMGSKEEL. Positions 522–525 match the Prevents secretion from ER motif; it reads KEEL.

The protein belongs to the protein disulfide isomerase family. As to quaternary structure, monomer; predominantly as monomer under reducing conditions. Homodimer; disulfide-linked. Part of a large chaperone multiprotein complex comprising DNAJB11, HSP90B1, HSPA5, HYOU, PDIA2, PDIA4, PDIA6, PPIB, SDF2L1, UGGT1 and very small amounts of ERP29, but not, or at very low levels, CALR nor CANX. In terms of processing, the disulfide-linked homodimer exhibits an enhanced chaperone activity. Glycosylated.

It localises to the endoplasmic reticulum lumen. The enzyme catalyses Catalyzes the rearrangement of -S-S- bonds in proteins.. Acts as an intracellular estrogen-binding protein. May be involved in modulating cellular levels and biological functions of estrogens in the pancreas. May act as a chaperone that inhibits aggregation of misfolded proteins. The protein is Protein disulfide-isomerase A2 (PDIA2) of Pongo abelii (Sumatran orangutan).